A 451-amino-acid polypeptide reads, in one-letter code: Phosphoglucosamine mutase (451 aa).

Ser-107 functions as the Phosphoserine intermediate in the catalytic mechanism. Mg(2+) is bound by residues Ser-107, Asp-246, Asp-248, and Asp-250. Ser-107 bears the Phosphoserine mark.

This sequence belongs to the phosphohexose mutase family. Requires Mg(2+) as cofactor. Activated by phosphorylation.

It carries out the reaction alpha-D-glucosamine 1-phosphate = D-glucosamine 6-phosphate. In terms of biological role, catalyzes the conversion of glucosamine-6-phosphate to glucosamine-1-phosphate. This is Phosphoglucosamine mutase from Burkholderia multivorans (strain ATCC 17616 / 249).